Consider the following 178-residue polypeptide: Putative peroxiredoxin in rubredoxin operon (178 aa).

Residues 3–163 enclose the Thioredoxin domain; it reads RLVGKPAPEF…TLRVLKAFQT (161 aa). Catalysis depends on cysteine 50, which acts as the Cysteine sulfenic acid (-SOH) intermediate.

It belongs to the peroxiredoxin family. AhpC/Prx1 subfamily. As to quaternary structure, homodimer; disulfide-linked, upon oxidation.

The protein resides in the cytoplasm. The enzyme catalyses a hydroperoxide + [protein]-dithiol = [protein]-disulfide + an alcohol + H2O. Thiol-specific peroxidase that catalyzes the reduction of hydrogen peroxide and organic hydroperoxides to water and alcohols, respectively. Plays a role in cell protection against oxidative stress by detoxifying peroxides. The chain is Putative peroxiredoxin in rubredoxin operon from Clostridium pasteurianum.